The sequence spans 148 residues: RxLR effector protein SFI7 (148 aa).

An N-terminal signal peptide occupies residues 1–22 (MRAYFVLLVAATAILTYGGATA). Residue Asn-32 is glycosylated (N-linked (GlcNAc...) asparagine). The RxLR-dEER motif lies at 44–58 (RSLRVAPSGGNGEER).

The protein belongs to the RxLR effector family.

The protein localises to the secreted. Its subcellular location is the host cytoplasm. It is found in the host cell membrane. Effector that suppresses flg22-induced post-translational MAP kinase activation in tomato but not in Arabidopsis. The perception of highly conserved pathogen- or microbe-associated molecular patterns (PAMPs/MAMPs), such as flg22, triggers converging signaling pathways recruiting MAP kinase cascades and inducing transcriptional re-programming, yielding a generic antimicrobial response. Also partially attenuates INF1-triggered cell death. In Phytophthora infestans (strain T30-4) (Potato late blight agent), this protein is RxLR effector protein SFI7.